The sequence spans 396 residues: S-adenosylmethionine synthase (396 aa).

An ATP-binding site is contributed by His15. Residue Asp17 coordinates Mg(2+). Glu43 provides a ligand contact to K(+). 2 residues coordinate L-methionine: Glu56 and Gln99. Residues Gln99–Arg109 form a flexible loop region. ATP-binding positions include Asp175–Lys177, Arg241–Phe242, Asp250, Arg256–Lys257, Ser273, and Lys277. An L-methionine-binding site is contributed by Asp250. Lys281 serves as a coordination point for L-methionine.

The protein belongs to the AdoMet synthase family. As to quaternary structure, homotetramer; dimer of dimers. Mg(2+) serves as cofactor. K(+) is required as a cofactor.

The protein resides in the cytoplasm. The catalysed reaction is L-methionine + ATP + H2O = S-adenosyl-L-methionine + phosphate + diphosphate. Its pathway is amino-acid biosynthesis; S-adenosyl-L-methionine biosynthesis; S-adenosyl-L-methionine from L-methionine: step 1/1. Catalyzes the formation of S-adenosylmethionine (AdoMet) from methionine and ATP. The overall synthetic reaction is composed of two sequential steps, AdoMet formation and the subsequent tripolyphosphate hydrolysis which occurs prior to release of AdoMet from the enzyme. This is S-adenosylmethionine synthase from Pelotomaculum thermopropionicum (strain DSM 13744 / JCM 10971 / SI).